Here is a 155-residue protein sequence, read N- to C-terminus: Ribonuclease H (155 aa).

Positions 1-146 (MNALFAWTDG…ADELARAGMA (146 aa)) constitute an RNase H type-1 domain. Mg(2+) is bound by residues D9, E52, D74, and D138.

This sequence belongs to the RNase H family. As to quaternary structure, monomer. Mg(2+) serves as cofactor.

It is found in the cytoplasm. The catalysed reaction is Endonucleolytic cleavage to 5'-phosphomonoester.. Its function is as follows. Endonuclease that specifically degrades the RNA of RNA-DNA hybrids. The chain is Ribonuclease H from Paracoccus denitrificans (strain Pd 1222).